We begin with the raw amino-acid sequence, 148 residues long: Auxin-responsive protein SAUR65 (148 aa).

The protein belongs to the ARG7 family.

Its subcellular location is the cell membrane. In terms of biological role, may promote auxin-stimulated organ elongation, such as hypocotyls, stamen filaments and petals. The protein is Auxin-responsive protein SAUR65 of Arabidopsis thaliana (Mouse-ear cress).